A 420-amino-acid polypeptide reads, in one-letter code: MVCSSFIRSFIVQAGCRIGVLAQGRHQFIHIKKTLSVGFGFRTSVIGFRTTSGIGFRTSAKMMVDTSAGEKRISLVDMPPEKVDDGGYIGGGWKNDDGSLSCGYCSFRGKRSTMEDFYDIKASTIEGQAVCMFGIFDGHGGSRAAEYLKEHLFNNLMKHPQFLTDTKLALNETYKQTDVAFLESEKDTYRDDGSTASAAVLVGNHLYVANVGDSRTIVSKAGKAIALSDDHKPNRSDERKRIESAGGVIMWAGTWRVGGVLAMSRAFGNRMLKQFVVAEPEIQDLEIDHEAELLVLASDGLWDVVPNEDAVALAQSEEEPEAAARKLTDTAFSRGSADNITCIVVKFRHDKTESPKIETNAMAESEPELNPTTELEPESNPSTALETESIPKAELESEPDAIPDPKPETEPETKGEKAGE.

Residues 101-347 (SCGYCSFRGK…DNITCIVVKF (247 aa)) enclose the PPM-type phosphatase domain. The Mn(2+) site is built by aspartate 137, glycine 138, aspartate 299, and aspartate 338. The segment at 353-420 (ESPKIETNAM…PETKGEKAGE (68 aa)) is disordered. Basic and acidic residues predominate over residues 403–420 (PDPKPETEPETKGEKAGE).

It belongs to the PP2C family. Mg(2+) serves as cofactor. Mn(2+) is required as a cofactor.

It catalyses the reaction O-phospho-L-seryl-[protein] + H2O = L-seryl-[protein] + phosphate. The catalysed reaction is O-phospho-L-threonyl-[protein] + H2O = L-threonyl-[protein] + phosphate. The protein is Probable protein phosphatase 2C 76 of Arabidopsis thaliana (Mouse-ear cress).